The following is a 355-amino-acid chain: MTIQIFGTVCIDKVRKIEEFPKSLGTYTPVISEQILLGGEASNTFVCINEWVEKGQESIKLIVPPLVDDLNGKFIINKLNQSTGKTSDKNVIFTQIQEINNNNENNYLKYTPITDIYVCNKKERTMFGIGFPEIDQYMVQCKEIKEKILNVDLQFGPNHWISLDANYPLINREVIKKSIITNTNLYIMDQELDTVVDELSLENTSIEHTSNLIFQSSSDHFGNKDGPIKEFFNIMNQWFQKDNGIFKKFLFILTDSKNGFGIGGTWNNEWIEPYWFTPSAIPSDKVVDTTGAGDSFRAGLIFSLVHKNQSLSDSLEFASACGALNCLSIGGCSSTPTLNSINQFLKLNNKNQMFL.

The protein belongs to the carbohydrate kinase PfkB family.

This is an uncharacterized protein from Dictyostelium discoideum (Social amoeba).